Here is a 402-residue protein sequence, read N- to C-terminus: Imidazolonepropionase (402 aa).

The Fe(3+) site is built by His66 and His68. Residues His66 and His68 each contribute to the Zn(2+) site. 3 residues coordinate 4-imidazolone-5-propanoate: Arg75, Tyr138, and His171. Tyr138 lines the N-formimidoyl-L-glutamate pocket. Position 236 (His236) interacts with Fe(3+). Zn(2+) is bound at residue His236. Gln239 contributes to the 4-imidazolone-5-propanoate binding site. Asp311 contacts Fe(3+). Residue Asp311 coordinates Zn(2+). Asn313 and Gly315 together coordinate N-formimidoyl-L-glutamate. Residue Thr316 coordinates 4-imidazolone-5-propanoate.

This sequence belongs to the metallo-dependent hydrolases superfamily. HutI family. It depends on Zn(2+) as a cofactor. The cofactor is Fe(3+).

The protein resides in the cytoplasm. It carries out the reaction 4-imidazolone-5-propanoate + H2O = N-formimidoyl-L-glutamate. It functions in the pathway amino-acid degradation; L-histidine degradation into L-glutamate; N-formimidoyl-L-glutamate from L-histidine: step 3/3. Its function is as follows. Catalyzes the hydrolytic cleavage of the carbon-nitrogen bond in imidazolone-5-propanoate to yield N-formimidoyl-L-glutamate. It is the third step in the universal histidine degradation pathway. The chain is Imidazolonepropionase from Pseudomonas paraeruginosa (strain DSM 24068 / PA7) (Pseudomonas aeruginosa (strain PA7)).